The chain runs to 567 residues: Zinc finger protein 512 (567 aa).

A disordered region spans residues 1 to 32; it reads MSSRLGAVPATSGPTTFKQQRSTRIVGAKNSR. Residues 12 to 23 are compositionally biased toward polar residues; it reads SGPTTFKQQRST. Residues lysine 18 and lysine 84 each participate in a glycyl lysine isopeptide (Lys-Gly) (interchain with G-Cter in SUMO2) cross-link. Positions 86–148 are disordered; it reads AATSHVEGSG…QARRIRKEPP (63 aa). Over residues 119 to 130 the composition is skewed to basic residues; that stretch reads KKHKLYGRKQRP. Residues 197–220 form a C2H2-type 1 zinc finger; it reads FTCHHCGKQLRSLAGMKYHVMANH. Lysine 227 participates in a covalent cross-link: Glycyl lysine isopeptide (Lys-Gly) (interchain with G-Cter in SUMO2). The C2H2-type 2 zinc-finger motif lies at 287 to 310; it reads LKCHHCGKPYRSKAGLAYHLRSEH. Lysine 333 participates in a covalent cross-link: Glycyl lysine isopeptide (Lys-Gly) (interchain with G-Cter in SUMO2). The C2H2-type 3; atypical zinc-finger motif lies at 406–430; sequence IQCPNQGCEAVYSSVSGLKAHLGSC. The segment at 440 to 463 adopts a C2H2-type 4 zinc-finger fold; sequence YKCLLCQKEFVSESGVKYHINSVH. The tract at residues 486–567 is disordered; that stretch reads QRQQEEEKRR…PKTNHKRGRK (82 aa). The segment covering 495-508 has biased composition (basic residues); that stretch reads RQQHRSRRSLRRRQ. Positions 523-532 are enriched in basic and acidic residues; that stretch reads VGKDQRRNNE. Residues 556-567 show a composition bias toward basic residues; the sequence is KPPKTNHKRGRK.

Belongs to the krueppel C2H2-type zinc-finger protein family.

It localises to the nucleus. In terms of biological role, may be involved in transcriptional regulation. The protein is Zinc finger protein 512 (ZNF512) of Pongo abelii (Sumatran orangutan).